Reading from the N-terminus, the 265-residue chain is Imidazole glycerol phosphate synthase subunit HisF (265 aa).

Residues aspartate 17 and aspartate 136 contribute to the active site.

It belongs to the HisA/HisF family. As to quaternary structure, heterodimer of HisH and HisF.

Its subcellular location is the cytoplasm. The catalysed reaction is 5-[(5-phospho-1-deoxy-D-ribulos-1-ylimino)methylamino]-1-(5-phospho-beta-D-ribosyl)imidazole-4-carboxamide + L-glutamine = D-erythro-1-(imidazol-4-yl)glycerol 3-phosphate + 5-amino-1-(5-phospho-beta-D-ribosyl)imidazole-4-carboxamide + L-glutamate + H(+). It participates in amino-acid biosynthesis; L-histidine biosynthesis; L-histidine from 5-phospho-alpha-D-ribose 1-diphosphate: step 5/9. Functionally, IGPS catalyzes the conversion of PRFAR and glutamine to IGP, AICAR and glutamate. The HisF subunit catalyzes the cyclization activity that produces IGP and AICAR from PRFAR using the ammonia provided by the HisH subunit. This Mycolicibacterium paratuberculosis (strain ATCC BAA-968 / K-10) (Mycobacterium paratuberculosis) protein is Imidazole glycerol phosphate synthase subunit HisF.